The sequence spans 271 residues: ATP synthase subunit a (271 aa).

Transmembrane regions (helical) follow at residues 40–60, 100–120, 146–166, 220–240, and 242–262; these read TINI…LVLF, LIAP…LMDL, DVNV…FYNI, LIFI…LNVP, and AIFH…LTIV.

It belongs to the ATPase A chain family. F-type ATPases have 2 components, CF(1) - the catalytic core - and CF(0) - the membrane proton channel. CF(1) has five subunits: alpha(3), beta(3), gamma(1), delta(1), epsilon(1). CF(0) has three main subunits: a(1), b(2) and c(9-12). The alpha and beta chains form an alternating ring which encloses part of the gamma chain. CF(1) is attached to CF(0) by a central stalk formed by the gamma and epsilon chains, while a peripheral stalk is formed by the delta and b chains.

Its subcellular location is the cell inner membrane. Its function is as follows. Key component of the proton channel; it plays a direct role in the translocation of protons across the membrane. The sequence is that of ATP synthase subunit a from Shigella flexneri.